We begin with the raw amino-acid sequence, 150 residues long: Endoribonuclease YbeY (150 aa).

3 residues coordinate Zn(2+): His112, His116, and Asp122.

It belongs to the endoribonuclease YbeY family. Zn(2+) is required as a cofactor.

The protein resides in the cytoplasm. Its function is as follows. Single strand-specific metallo-endoribonuclease involved in late-stage 70S ribosome quality control and in maturation of the 3' terminus of the 16S rRNA. The protein is Endoribonuclease YbeY of Protochlamydia amoebophila (strain UWE25).